The chain runs to 103 residues: MAAQQKIRIKLKSYDHSLVDKWALRIIDVVKQTDAIIFGPIPLPTKAHVYTVNRSPHVDKKSREQFSFSSHKRLIEIINPTSRTIDMLMKLELPSGVDVEIKS.

Belongs to the universal ribosomal protein uS10 family. Part of the 30S ribosomal subunit.

Functionally, involved in the binding of tRNA to the ribosomes. The sequence is that of Small ribosomal subunit protein uS10 from Chlorobium phaeobacteroides (strain DSM 266 / SMG 266 / 2430).